Reading from the N-terminus, the 199-residue chain is ATP-dependent Clp protease proteolytic subunit (199 aa).

S99 (nucleophile) is an active-site residue. The active site involves H124.

The protein belongs to the peptidase S14 family. As to quaternary structure, fourteen ClpP subunits assemble into 2 heptameric rings which stack back to back to give a disk-like structure with a central cavity, resembling the structure of eukaryotic proteasomes.

It localises to the cytoplasm. The catalysed reaction is Hydrolysis of proteins to small peptides in the presence of ATP and magnesium. alpha-casein is the usual test substrate. In the absence of ATP, only oligopeptides shorter than five residues are hydrolyzed (such as succinyl-Leu-Tyr-|-NHMec, and Leu-Tyr-Leu-|-Tyr-Trp, in which cleavage of the -Tyr-|-Leu- and -Tyr-|-Trp bonds also occurs).. In terms of biological role, cleaves peptides in various proteins in a process that requires ATP hydrolysis. Has a chymotrypsin-like activity. Plays a major role in the degradation of misfolded proteins. The chain is ATP-dependent Clp protease proteolytic subunit from Lactococcus lactis subsp. cremoris (strain SK11).